Consider the following 207-residue polypeptide: Large ribosomal subunit protein uL4 (207 aa).

Residues 49 to 78 (HAVKNRSAVSGGGRKPWRQKGTGRARQGSI) form a disordered region.

The protein belongs to the universal ribosomal protein uL4 family. In terms of assembly, part of the 50S ribosomal subunit.

Functionally, one of the primary rRNA binding proteins, this protein initially binds near the 5'-end of the 23S rRNA. It is important during the early stages of 50S assembly. It makes multiple contacts with different domains of the 23S rRNA in the assembled 50S subunit and ribosome. Its function is as follows. Forms part of the polypeptide exit tunnel. This Streptococcus equi subsp. zooepidemicus (strain H70) protein is Large ribosomal subunit protein uL4.